Consider the following 311-residue polypeptide: Giardin subunit gamma (311 aa).

A coiled-coil region spans residues 185-233; that stretch reads GLQTEINSLEAIIEREFAQAANRLNQEVSNFKESFDASERNIKLQKKHV.

In terms of assembly, interacts with EB1.

It is found in the cytoplasm. It localises to the cytoskeleton. In terms of biological role, giardins are involved in parasite attachment to the intestinal mucosa and in the cytoskeletal disassembly and reassembly that marks the transition from infectious trophozoite to transmissible cyst. They may interact with other cytoskeletal proteins such as microtubules in the microribbons or crossbridges, to maintain the integrity of the ventral disk. Involved in formation of the ventral disk. This Giardia intestinalis (Giardia lamblia) protein is Giardin subunit gamma.